A 443-amino-acid polypeptide reads, in one-letter code: Methionine aminopeptidase 2-1 (443 aa).

The segment at Met-1–Asn-90 is disordered. A compositionally biased stretch (acidic residues) spans Ala-33 to Gly-48. Basic residues predominate over residues Lys-58 to Ala-73. Substrate is bound at residue His-196. A divalent metal cation contacts are provided by Asp-216, Asp-227, and His-296. Residue His-304 coordinates substrate. A divalent metal cation is bound by residues Glu-329 and Glu-424.

This sequence belongs to the peptidase M24A family. Methionine aminopeptidase eukaryotic type 2 subfamily. Co(2+) serves as cofactor. Requires Zn(2+) as cofactor. It depends on Mn(2+) as a cofactor. The cofactor is Fe(2+).

It localises to the cytoplasm. It carries out the reaction Release of N-terminal amino acids, preferentially methionine, from peptides and arylamides.. In terms of biological role, cotranslationally removes the N-terminal methionine from nascent proteins. The N-terminal methionine is often cleaved when the second residue in the primary sequence is small and uncharged (Met-Ala-, Cys, Gly, Pro, Ser, Thr, or Val). The protein is Methionine aminopeptidase 2-1 of Talaromyces stipitatus (strain ATCC 10500 / CBS 375.48 / QM 6759 / NRRL 1006) (Penicillium stipitatum).